Here is an 81-residue protein sequence, read N- to C-terminus: Sec-independent protein translocase protein TatA (81 aa).

The chain crosses the membrane as a helical span at residues 1 to 21 (MGGISIWQLLIVALIVILLFG). The interval 34 to 81 (GAVKGFKNAMTPEDENKSLDDKEKDQTAATSQQAAEKQPETESKDKQA) is disordered. Basic and acidic residues-rich tracts occupy residues 47 to 59 (DENK…EKDQ) and 70 to 81 (KQPETESKDKQA).

Belongs to the TatA/E family. The Tat system comprises two distinct complexes: a TatABC complex, containing multiple copies of TatA, TatB and TatC subunits, and a separate TatA complex, containing only TatA subunits. Substrates initially bind to the TatABC complex, which probably triggers association of the separate TatA complex to form the active translocon.

Its subcellular location is the cell inner membrane. Its function is as follows. Part of the twin-arginine translocation (Tat) system that transports large folded proteins containing a characteristic twin-arginine motif in their signal peptide across membranes. TatA could form the protein-conducting channel of the Tat system. The protein is Sec-independent protein translocase protein TatA of Shewanella frigidimarina (strain NCIMB 400).